Reading from the N-terminus, the 273-residue chain is MHDAQVRVAIAGAGGRMGRQLIQAALQMEGVVLGAALEREGSTLLGTDAGELAGAGHSGVTVQSSLDAVKADFDVFIDFTRPEGTLEHLAFCRQHGKGMIIGTTGFDDAGKQAIKDAAQDIAIVFAANFSVGVNVMLKLLEKAAKVMGDYTDIEIIEAHHRHKVDAPSGTALAMGEAIAYALDKDLKDCAVYTREGHTGERVPGTIGFATVRAGDIVGEHTAIFADIGERVEITHKASSRMTFANGAVRSALWLKSKGNGLFDMRDVLNLNEL.

NAD(+) is bound by residues 12-17 (GAGGRM) and Glu-38. Arg-39 provides a ligand contact to NADP(+). NAD(+) contacts are provided by residues 102–104 (GTT) and 126–129 (AANF). His-159 acts as the Proton donor/acceptor in catalysis. His-160 lines the (S)-2,3,4,5-tetrahydrodipicolinate pocket. Residue Lys-163 is the Proton donor of the active site. 169–170 (GT) contacts (S)-2,3,4,5-tetrahydrodipicolinate.

The protein belongs to the DapB family. As to quaternary structure, homotetramer.

It is found in the cytoplasm. The catalysed reaction is (S)-2,3,4,5-tetrahydrodipicolinate + NAD(+) + H2O = (2S,4S)-4-hydroxy-2,3,4,5-tetrahydrodipicolinate + NADH + H(+). The enzyme catalyses (S)-2,3,4,5-tetrahydrodipicolinate + NADP(+) + H2O = (2S,4S)-4-hydroxy-2,3,4,5-tetrahydrodipicolinate + NADPH + H(+). It functions in the pathway amino-acid biosynthesis; L-lysine biosynthesis via DAP pathway; (S)-tetrahydrodipicolinate from L-aspartate: step 4/4. In terms of biological role, catalyzes the conversion of 4-hydroxy-tetrahydrodipicolinate (HTPA) to tetrahydrodipicolinate. The sequence is that of 4-hydroxy-tetrahydrodipicolinate reductase from Enterobacter sp. (strain 638).